The following is a 316-amino-acid chain: Carbamate kinase-like protein YahI (316 aa).

It belongs to the carbamate kinase family.

The sequence is that of Carbamate kinase-like protein YahI (yahI) from Escherichia coli (strain K12).